Reading from the N-terminus, the 310-residue chain is Malate dehydrogenase (310 aa).

Residues 7-13 and Asp34 each bind NAD(+); that span reads GAAGGIG. Arg81 and Arg87 together coordinate substrate. Residues Asn94 and 117-119 each bind NAD(+); that span reads ITN. The substrate site is built by Asn119 and Arg153. Catalysis depends on His177, which acts as the Proton acceptor. Met227 contributes to the NAD(+) binding site.

This sequence belongs to the LDH/MDH superfamily. MDH type 1 family. In terms of assembly, homodimer.

It carries out the reaction (S)-malate + NAD(+) = oxaloacetate + NADH + H(+). Catalyzes the reversible oxidation of malate to oxaloacetate. This Vibrio vulnificus (strain YJ016) protein is Malate dehydrogenase.